A 92-amino-acid polypeptide reads, in one-letter code: DNA-directed RNA polymerase subunit Rpo11 (92 aa).

It belongs to the archaeal Rpo11/eukaryotic RPB11/RPC19 RNA polymerase subunit family. Part of the 13-subunit RNA polymerase complex.

The protein resides in the cytoplasm. It catalyses the reaction RNA(n) + a ribonucleoside 5'-triphosphate = RNA(n+1) + diphosphate. DNA-dependent RNA polymerase (RNAP) catalyzes the transcription of DNA into RNA using the four ribonucleoside triphosphates as substrates. In Saccharolobus shibatae (strain ATCC 51178 / DSM 5389 / JCM 8931 / NBRC 15437 / B12) (Sulfolobus shibatae), this protein is DNA-directed RNA polymerase subunit Rpo11.